The primary structure comprises 169 residues: uncharacterized protein (169 aa).

It to M.tuberculosis Rv1480.

This is an uncharacterized protein from Mycobacterium avium.